Here is a 457-residue protein sequence, read N- to C-terminus: Neuropeptide receptor npr-1 (457 aa).

The Extracellular segment spans residues 1–22 (MEVENFTDCQVYWKVYPDPSQS). The chain crosses the membrane as a helical span at residues 23–43 (IYAIVPFLTVYLFLFFLGLFG). Topologically, residues 44 to 62 (NVTLIYVTCSHKALLSVQN) are cytoplasmic. A helical membrane pass occupies residues 63–83 (IFILNLAASDCMMCILSLPIT). Topologically, residues 84–100 (PITNVYKNWYFGNLLCH) are extracellular. Cysteine 99 and cysteine 178 are joined by a disulfide. The chain crosses the membrane as a helical span at residues 101 to 121 (LIPCIQGISIFVCTFSLGAIA). Topologically, residues 122 to 140 (LDRYILVVRPHSTPLSQRG) are cytoplasmic. A helical membrane pass occupies residues 141-161 (AFLTTVLLWILSFVVTLPYAF). Topologically, residues 162–193 (NMQMIEYTEERICGYFCTEKWESAKSRRAYTM) are extracellular. Residues 194–214 (IVMLAQFVVPFAVMAFCYANI) form a helical membrane-spanning segment. The Cytoplasmic segment spans residues 215 to 279 (VSVLSKRAQT…LQNRRTTSIL (65 aa)). Residues 280 to 300 (VTMVVWFGITWLPHNVISLII) form a helical membrane-spanning segment. The Extracellular segment spans residues 301–324 (EYDDTQSFFRLYGRDDYDISYLLN). Residues 325–345 (LFTHSIAMSNNVLNPVLYAWL) form a helical membrane-spanning segment. The Cytoplasmic segment spans residues 346 to 457 (NPSFRQLVIK…IEFSVNDTLV (112 aa)).

This sequence belongs to the G-protein coupled receptor 1 family. As to expression, expressed in neurons, including neurons in the head, the ventral nerve cord, and the preanal ganglion.

Its subcellular location is the membrane. Functionally, G-protein coupled receptor for FARP(FMRFamide related peptide) neuropeptides. Activated by FARP neuropeptides flp-18 and flp-21. Plays a role in modulating social and feeding behavior. Required to modulate locomotion quiescence during the sleep-like state called lethargus, which occurs during molting between larval and adult stages, in part by regulating touch sensitivity. This chain is Neuropeptide receptor npr-1, found in Caenorhabditis elegans.